The following is a 68-amino-acid chain: Large ribosomal subunit protein uL29 (68 aa).

The protein belongs to the universal ribosomal protein uL29 family.

This chain is Large ribosomal subunit protein uL29, found in Streptococcus thermophilus (strain ATCC BAA-250 / LMG 18311).